The chain runs to 453 residues: Zinc finger protein Pegasus (453 aa).

C2H2-type zinc fingers lie at residues 101-123, 129-151, and 157-180; these read LKCR…IRIH, HRCH…MRSH, and YKCE…RRKH. Residues 279–293 are compositionally biased toward polar residues; the sequence is GQLSSLPPDTQNPAS. A disordered region spans residues 279 to 375; it reads GQLSSLPPDT…QPSTPAPALP (97 aa). Positions 315 to 332 are enriched in low complexity; that stretch reads CSSAVSTSVAQSSSPASP. Positions 356-368 are enriched in polar residues; sequence RTSTPSISNSQPS. C2H2-type zinc fingers lie at residues 383-405 and 411-438; these read HHCQ…MGCH and FQCN…CCQH.

Belongs to the Ikaros C2H2-type zinc-finger protein family. Probably self-associates.

The protein localises to the nucleus. Functionally, transcriptional repressor that binds the core 5'GNNTGTNG-3' DNA consensus sequence. The chain is Zinc finger protein Pegasus (ikzf5) from Xenopus laevis (African clawed frog).